Consider the following 420-residue polypeptide: UDP-N-acetylglucosamine 1-carboxyvinyltransferase (420 aa).

Position 22 to 23 (22 to 23 (KN)) interacts with phosphoenolpyruvate. R91 lines the UDP-N-acetyl-alpha-D-glucosamine pocket. C115 (proton donor) is an active-site residue. C115 is subject to 2-(S-cysteinyl)pyruvic acid O-phosphothioketal. Residues 120–124 (RPVDL), 160–163 (KVSV), D305, and I327 each bind UDP-N-acetyl-alpha-D-glucosamine.

This sequence belongs to the EPSP synthase family. MurA subfamily.

The protein localises to the cytoplasm. It catalyses the reaction phosphoenolpyruvate + UDP-N-acetyl-alpha-D-glucosamine = UDP-N-acetyl-3-O-(1-carboxyvinyl)-alpha-D-glucosamine + phosphate. Its pathway is cell wall biogenesis; peptidoglycan biosynthesis. Functionally, cell wall formation. Adds enolpyruvyl to UDP-N-acetylglucosamine. The polypeptide is UDP-N-acetylglucosamine 1-carboxyvinyltransferase (Erwinia tasmaniensis (strain DSM 17950 / CFBP 7177 / CIP 109463 / NCPPB 4357 / Et1/99)).